A 549-amino-acid polypeptide reads, in one-letter code: DNA gyrase subunit A (549 aa).

One can recognise a Topo IIA-type catalytic domain in the interval 1-549 (RPARSHAKSA…GMATNIPPHN (549 aa)). The active-site O-(5'-phospho-DNA)-tyrosine intermediate is the Y65. Residues 191-331 (LLGAFISEGC…VQQMLLEFGV (141 aa)) form the DOD-type homing endonuclease domain.

The protein belongs to the type II topoisomerase GyrA/ParC subunit family. Heterotetramer, composed of two GyrA and two GyrB chains. In the heterotetramer, GyrA contains the active site tyrosine that forms a transient covalent intermediate with DNA, while GyrB binds cofactors and catalyzes ATP hydrolysis. This protein undergoes a protein self splicing that involves a post-translational excision of the intervening region (intein) followed by peptide ligation.

Its subcellular location is the cytoplasm. It catalyses the reaction ATP-dependent breakage, passage and rejoining of double-stranded DNA.. Its function is as follows. A type II topoisomerase that negatively supercoils closed circular double-stranded (ds) DNA in an ATP-dependent manner to modulate DNA topology and maintain chromosomes in an underwound state. Negative supercoiling favors strand separation, and DNA replication, transcription, recombination and repair, all of which involve strand separation. Also able to catalyze the interconversion of other topological isomers of dsDNA rings, including catenanes and knotted rings. Type II topoisomerases break and join 2 DNA strands simultaneously in an ATP-dependent manner. In Mycobacterium kansasii, this protein is DNA gyrase subunit A (gyrA).